An 86-amino-acid chain; its full sequence is Protein Tat (86 aa).

The interval 1–24 (MDPVDPNQEPWNHPGSQPRTACNN) is interaction with human CREBBP. Residues 1-48 (MDPVDPNQEPWNHPGSQPRTACNNCYCKKCCYHCQLCFLKKGLGIYYG) form a transactivation region. Positions 22, 25, and 27 each coordinate Zn(2+). A cysteine-rich region spans residues 22-37 (CNNCYCKKCCYHCQLC). N6-acetyllysine; by host PCAF is present on K28. Residues C30, H33, C34, and C37 each contribute to the Zn(2+) site. A core region spans residues 38–48 (FLKKGLGIYYG). A compositionally biased stretch (basic residues) spans 48–58 (GRKKRRQRRGT). The interval 48 to 86 (GRKKRRQRRGTPKSLQDHQTLIPKQPLSRTSGDPTGPEK) is disordered. Positions 49–57 (RKKRRQRRG) match the Nuclear localization signal, RNA-binding (TAR), and protein transduction motif. The interaction with the host capping enzyme RNGTT stretch occupies residues 49–86 (RKKRRQRRGTPKSLQDHQTLIPKQPLSRTSGDPTGPEK). 2 positions are modified to N6-acetyllysine; by host EP300 and GCN5L2: K50 and K51. Asymmetric dimethylarginine; by host PRMT6 is present on residues R52 and R53. K71 is covalently cross-linked (Glycyl lysine isopeptide (Lys-Gly) (interchain with G-Cter in ubiquitin)).

Belongs to the lentiviruses Tat family. Interacts with host CCNT1. Associates with the P-TEFb complex composed at least of Tat, P-TEFb (CDK9 and CCNT1), TAR RNA, RNA Pol II. Recruits the HATs CREBBP, TAF1/TFIID, EP300, PCAF and GCN5L2. Interacts with host KAT5/Tip60; this interaction targets the latter to degradation. Interacts with the host deacetylase SIRT1. Interacts with host capping enzyme RNGTT; this interaction stimulates RNGTT. Binds to host KDR, and to the host integrins ITGAV/ITGB3 and ITGA5/ITGB1. Interacts with host KPNB1/importin beta-1 without previous binding to KPNA1/importin alpha-1. Interacts with EIF2AK2. Interacts with host nucleosome assembly protein NAP1L1; this interaction may be required for the transport of Tat within the nucleus, since the two proteins interact at the nuclear rim. Interacts with host C1QBP/SF2P32; this interaction involves lysine-acetylated Tat. Interacts with the host chemokine receptors CCR2, CCR3 and CXCR4. Interacts with host DPP4/CD26; this interaction may trigger an anti-proliferative effect. Interacts with host LDLR. Interacts with the host extracellular matrix metalloproteinase MMP1. Interacts with host PRMT6; this interaction mediates Tat's methylation. Interacts with, and is ubiquitinated by MDM2/Hdm2. Interacts with host PSMC3 and HTATIP2. Interacts with STAB1; this interaction may overcome SATB1-mediated repression of IL2 and IL2RA (interleukin) in T cells by binding to the same domain than HDAC1. Interacts (when acetylated) with human CDK13, thereby increasing HIV-1 mRNA splicing and promoting the production of the doubly spliced HIV-1 protein Nef. Interacts with host TBP; this interaction modulates the activity of transcriptional pre-initiation complex. Interacts with host RELA. Interacts with host PLSCR1; this interaction negatively regulates Tat transactivation activity by altering its subcellular distribution. Asymmetrical arginine methylation by host PRMT6 seems to diminish the transactivation capacity of Tat and affects the interaction with host CCNT1. Post-translationally, acetylation by EP300, CREBBP, GCN5L2/GCN5 and PCAF regulates the transactivation activity of Tat. EP300-mediated acetylation of Lys-50 promotes dissociation of Tat from the TAR RNA through the competitive binding to PCAF's bromodomain. In addition, the non-acetylated Tat's N-terminus can also interact with PCAF. PCAF-mediated acetylation of Lys-28 enhances Tat's binding to CCNT1. Lys-50 is deacetylated by SIRT1. In terms of processing, polyubiquitination by host MDM2 does not target Tat to degradation, but activates its transactivation function and fosters interaction with CCNT1 and TAR RNA. Phosphorylated by EIF2AK2 on serine and threonine residues adjacent to the basic region important for TAR RNA binding and function. Phosphorylation of Tat by EIF2AK2 is dependent on the prior activation of EIF2AK2 by dsRNA.

It localises to the host nucleus. Its subcellular location is the host nucleolus. It is found in the host cytoplasm. The protein localises to the secreted. Transcriptional activator that increases RNA Pol II processivity, thereby increasing the level of full-length viral transcripts. Recognizes a hairpin structure at the 5'-LTR of the nascent viral mRNAs referred to as the transactivation responsive RNA element (TAR) and recruits the cyclin T1-CDK9 complex (P-TEFb complex) that will in turn hyperphosphorylate the RNA polymerase II to allow efficient elongation. The CDK9 component of P-TEFb and other Tat-activated kinases hyperphosphorylate the C-terminus of RNA Pol II that becomes stabilized and much more processive. Other factors such as HTATSF1/Tat-SF1, SUPT5H/SPT5, and HTATIP2 are also important for Tat's function. Besides its effect on RNA Pol II processivity, Tat induces chromatin remodeling of proviral genes by recruiting the histone acetyltransferases (HATs) CREBBP, EP300 and PCAF to the chromatin. This also contributes to the increase in proviral transcription rate, especially when the provirus integrates in transcriptionally silent region of the host genome. To ensure maximal activation of the LTR, Tat mediates nuclear translocation of NF-kappa-B by interacting with host RELA. Through its interaction with host TBP, Tat may also modulate transcription initiation. Tat can reactivate a latently infected cell by penetrating in it and transactivating its LTR promoter. In the cytoplasm, Tat is thought to act as a translational activator of HIV-1 mRNAs. In terms of biological role, extracellular circulating Tat can be endocytosed by surrounding uninfected cells via the binding to several surface receptors such as CD26, CXCR4, heparan sulfate proteoglycans (HSPG) or LDLR. Neurons are rarely infected, but they internalize Tat via their LDLR. Through its interaction with nuclear HATs, Tat is potentially able to control the acetylation-dependent cellular gene expression. Modulates the expression of many cellular genes involved in cell survival, proliferation or in coding for cytokines or cytokine receptors. Tat plays a role in T-cell and neurons apoptosis. Tat induced neurotoxicity and apoptosis probably contribute to neuroAIDS. Circulating Tat also acts as a chemokine-like and/or growth factor-like molecule that binds to specific receptors on the surface of the cells, affecting many cellular pathways. In the vascular system, Tat binds to ITGAV/ITGB3 and ITGA5/ITGB1 integrins dimers at the surface of endothelial cells and competes with bFGF for heparin-binding sites, leading to an excess of soluble bFGF. This Human immunodeficiency virus type 1 group M subtype H (isolate VI991) (HIV-1) protein is Protein Tat.